Here is a 305-residue protein sequence, read N- to C-terminus: 5'-hydroxyaverantin dehydrogenase stcG (305 aa).

Positions 25, 27, 48, 68, 186, 190, and 221 each coordinate NADP(+). Tyrosine 186 acts as the Proton acceptor in catalysis. The Lowers pKa of active site Tyr role is filled by lysine 190.

This sequence belongs to the short-chain dehydrogenases/reductases (SDR) family.

The enzyme catalyses (1'S,5'S)-5'-hydroxyaverantin + NAD(+) = (S)-5'-oxoaverantin + NADH + H(+). It carries out the reaction (1'S,5'R)-5'-hydroxyaverantin + NAD(+) = (S)-5'-oxoaverantin + NADH + 2 H(+). It functions in the pathway mycotoxin biosynthesis; sterigmatocystin biosynthesis. 5'-hydroxyaverantin dehydrogenase; part of the gene cluster that mediates the biosynthesis of sterigmatocystin (ST), a polyketide-derived furanocoumarin which is part of the most toxic and carcinogenic compounds among the known mycotoxins. The first step in the biosynthesis of sterigmatocystin is the production of hexanoate by the fatty acid synthase (FAS) units stcJ and stcK. The polyketide backbone is assembled by the non-reducing polyketide synthase stcA by condensation of the starter hexanoyl-CoA and 7 malonyl-CoA extender units followed by cyclization and release of norsolorinic acid. Norsolorinic acid is the first stable intermediate in the biosynthesis of sterigmatocystin and is converted into averantin (AVN) by the ketoreductase stcE which reduces the hexanoate ketone to an alcohol. Averantin is then oxidized into 5'-hydroxyaverantin (HAVN) by the cytochrome P450 monooxygenase stcF. 5'-hydroxyaverantin is further converted to 5'-oxyaverantin (OAVN) by the 5'-hydroxyaverantin dehydrogenase stcG. The next step is the conversion of OAVN into averufin (AVF) which is catalyzed by a yet to be identified enzyme. The cytochrome P450 monooxygenase stcB and the flavin-binding monooxygenase stcW are both required for the conversion of averufin to 1-hydroxyversicolorone. The esterase stcI probably catalyzes the formation of versiconal hemiacetal acetate from 1-hydroxyversicolorone. The oxydoreductase stcN then probably catalyzes the biosynthetic step from versiconal to versicolorin B (VERB). The next step is performed by the versicolorin B desaturase stcL to produce versicolorin A (VERA). The ketoreductase stcU and the cytochrome P450 monooxygenase stcS are involved in the conversion of versicolorin A to demethylsterigmatocystin. The Baeyer-Villiger oxidas stcQ and the reductase stcR might be involved in the biosynthetic step from versicolorin A to demethylsterigmatocystin. The final step in the biosynthesis of sterigmatocystin is the methylation of demethylsterigmatocystin catalyzed by the methyltransferase stcP. The protein is 5'-hydroxyaverantin dehydrogenase stcG of Emericella nidulans (strain FGSC A4 / ATCC 38163 / CBS 112.46 / NRRL 194 / M139) (Aspergillus nidulans).